A 301-amino-acid polypeptide reads, in one-letter code: Bifunctional dTDP-4-dehydrorhamnose 3,5-epimerase/dTDP-4-dehydrorhamnose reductase (301 aa).

Residues 23–24, 69–71, and Tyr-111 each bind NADPH; these read WI and GVT.

Belongs to the dTDP-4-dehydrorhamnose reductase family. In terms of tissue distribution, expressed in roots, leaves, stems and flowers.

It catalyses the reaction dTDP-4-dehydro-6-deoxy-alpha-D-glucose = dTDP-4-dehydro-beta-L-rhamnose. It carries out the reaction dTDP-beta-L-rhamnose + NADP(+) = dTDP-4-dehydro-beta-L-rhamnose + NADPH + H(+). It functions in the pathway carbohydrate biosynthesis; dTDP-L-rhamnose biosynthesis. In terms of biological role, bifunctional enzyme involved in dTDP-beta-L-rhamnose biosynthesis. Catalyzes the epimerization of the C3' and C5'positions of dTDP-6-deoxy-4-keto-alpha-D-glucose to form dTDP-4-keto-beta-L-rhamnose and its reduction to yield dTDP-beta-L-rhamnose. Can form UDP-beta-L-rhamnose from UDP-6-deoxy-4-keto-alpha-D-glucose, but cannot convert GDP-4-dehydro-6-deoxy-D-mannose to GDP-fucose. This is Bifunctional dTDP-4-dehydrorhamnose 3,5-epimerase/dTDP-4-dehydrorhamnose reductase from Arabidopsis thaliana (Mouse-ear cress).